A 158-amino-acid polypeptide reads, in one-letter code: Small ribosomal subunit protein bS16 (158 aa).

The span at 111–121 shows a compositional bias: low complexity; sequence AAAGLAEAPTK. The segment at 111–158 is disordered; the sequence is AAAGLAEAPTKPAKKAPKAEAAPKTEAAPKADAPKTEEQAGAGSGEQG. Basic and acidic residues predominate over residues 127-148; the sequence is PKAEAAPKTEAAPKADAPKTEE.

It belongs to the bacterial ribosomal protein bS16 family.

This Salinispora arenicola (strain CNS-205) protein is Small ribosomal subunit protein bS16.